The primary structure comprises 299 residues: Bifunctional protein FolD (299 aa).

NADP(+) contacts are provided by residues 168–170, S193, and I234; that span reads GRS.

This sequence belongs to the tetrahydrofolate dehydrogenase/cyclohydrolase family. Homodimer.

The catalysed reaction is (6R)-5,10-methylene-5,6,7,8-tetrahydrofolate + NADP(+) = (6R)-5,10-methenyltetrahydrofolate + NADPH. It carries out the reaction (6R)-5,10-methenyltetrahydrofolate + H2O = (6R)-10-formyltetrahydrofolate + H(+). The protein operates within one-carbon metabolism; tetrahydrofolate interconversion. In terms of biological role, catalyzes the oxidation of 5,10-methylenetetrahydrofolate to 5,10-methenyltetrahydrofolate and then the hydrolysis of 5,10-methenyltetrahydrofolate to 10-formyltetrahydrofolate. The sequence is that of Bifunctional protein FolD from Bartonella bacilliformis (strain ATCC 35685 / KC583 / Herrer 020/F12,63).